A 210-amino-acid chain; its full sequence is Na(+)-translocating NADH-quinone reductase subunit D (210 aa).

6 helical membrane-spanning segments follow: residues proline 14 to valine 34, leucine 42 to isoleucine 62, isoleucine 72 to alanine 92, alanine 96 to glycine 116, phenylalanine 131 to valine 151, and asparagine 178 to isoleucine 198.

This sequence belongs to the NqrDE/RnfAE family. As to quaternary structure, composed of six subunits; NqrA, NqrB, NqrC, NqrD, NqrE and NqrF.

It localises to the cell inner membrane. It carries out the reaction a ubiquinone + n Na(+)(in) + NADH + H(+) = a ubiquinol + n Na(+)(out) + NAD(+). NQR complex catalyzes the reduction of ubiquinone-1 to ubiquinol by two successive reactions, coupled with the transport of Na(+) ions from the cytoplasm to the periplasm. NqrA to NqrE are probably involved in the second step, the conversion of ubisemiquinone to ubiquinol. The protein is Na(+)-translocating NADH-quinone reductase subunit D of Shewanella frigidimarina (strain NCIMB 400).